Consider the following 999-residue polypeptide: Hypoxia up-regulated protein 1 (999 aa).

Residues 1 to 32 (MAATVRRQRPRRLLCWTLVAVLLADLLALSDT) form the signal peptide. Residues Asn155, Asn222, and Asn515 are each glycosylated (N-linked (GlcNAc...) asparagine). A disordered region spans residues 564–694 (VEDSPEEEST…KKQKPARKQK (131 aa)). Ser567 is subject to Phosphoserine. Positions 574 to 583 (LTKLGNTISS) are enriched in polar residues. The N-linked (GlcNAc...) asparagine glycan is linked to Asn596. 2 stretches are compositionally biased toward basic and acidic residues: residues 611–626 (GSKD…KEET) and 641–670 (PKGD…EEKG). N-linked (GlcNAc...) asparagine glycans are attached at residues Asn830, Asn862, and Asn869. Position 883 is an N6-acetyllysine (Lys883). Residues 909–999 (AKFTKPRPRP…QKRSSKNDEL (91 aa)) are disordered. N-linked (GlcNAc...) asparagine glycans are attached at residues Asn922 and Asn931. Basic and acidic residues predominate over residues 949-962 (EEAKPILEPDKEET). A Prevents secretion from ER motif is present at residues 996–999 (NDEL).

This sequence belongs to the heat shock protein 70 family. Part of a large chaperone multiprotein complex comprising DNAJB11, HSP90B1, HSPA5, HYOU, PDIA2, PDIA4, PDIA6, PPIB, SDF2L1, UGGT1 and very small amounts of ERP29, but not, or at very low levels, CALR nor CANX.

The protein localises to the endoplasmic reticulum lumen. In terms of biological role, has a pivotal role in cytoprotective cellular mechanisms triggered by oxygen deprivation. Promotes HSPA5/BiP-mediated ATP nucleotide exchange and thereby activates the unfolded protein response (UPR) pathway in the presence of endoplasmic reticulum stress. May play a role as a molecular chaperone and participate in protein folding. This chain is Hypoxia up-regulated protein 1 (HYOU1), found in Cricetulus griseus (Chinese hamster).